We begin with the raw amino-acid sequence, 200 residues long: TATA-box-binding protein 2 (200 aa).

2 tandem repeats follow at residues 25 to 101 (LQNI…ARIV) and 115 to 192 (IQNI…YPVL).

It belongs to the TBP family. As to quaternary structure, belongs to the TFIID complex together with the TBP-associated factors (TAFs). Binds DNA as monomer. Interacts with TAF1 (via N-terminus). Interacts with TFIIB1. Interacts with PTF2. Interacts with HAT5/ATHB-1 and ATHB-7. Component of a nuclear protein complex containing at least TATA binding proteins (TBPs, e.g. TBP1 and TBP2) and ATX1.

It is found in the nucleus. Functionally, general transcription factor (GTF) that functions at the core of the DNA-binding multiprotein factor TFIID. Binding of TFIID to the TATA box is the initial transcriptional step of the pre-initiation complex (PIC), playing a role in the activation of eukaryotic genes transcribed by RNA polymerase II. Interacts with TFIIB1 and is required for activated transcription and possibly basal transcription. May act as GTF of RNA polymerase I-dependent transcription and rRNA synthesis. Forms a ternary complex with PBRP1 and the rDNA promoter region. The polypeptide is TATA-box-binding protein 2 (Arabidopsis thaliana (Mouse-ear cress)).